The following is a 387-amino-acid chain: Sulfopyruvate decarboxylase (387 aa).

The protein belongs to the TPP enzyme family. Thiamine diphosphate serves as cofactor.

The catalysed reaction is 3-sulfopyruvate + H(+) = sulfoacetaldehyde + CO2. The protein operates within cofactor biosynthesis; coenzyme M biosynthesis. In terms of biological role, involved in the biosynthesis of the coenzyme M (2-mercaptoethanesulfonic acid). Catalyzes the decarboxylation of sulfopyruvate to sulfoacetaldehyde. Is not able to decarboxylate the analogous compounds 2-oxoglutarate or 2-oxosuberate. The protein is Sulfopyruvate decarboxylase of Methanosarcina acetivorans (strain ATCC 35395 / DSM 2834 / JCM 12185 / C2A).